We begin with the raw amino-acid sequence, 332 residues long: Aspartate carbamoyltransferase catalytic subunit (332 aa).

The carbamoyl phosphate site is built by arginine 78 and threonine 79. Position 106 (lysine 106) interacts with L-aspartate. Residues arginine 128, histidine 156, and glutamine 159 each coordinate carbamoyl phosphate. L-aspartate-binding residues include arginine 189 and arginine 243. Carbamoyl phosphate-binding residues include glycine 284 and proline 285.

It belongs to the aspartate/ornithine carbamoyltransferase superfamily. ATCase family. Heterododecamer (2C3:3R2) of six catalytic PyrB chains organized as two trimers (C3), and six regulatory PyrI chains organized as three dimers (R2).

It carries out the reaction carbamoyl phosphate + L-aspartate = N-carbamoyl-L-aspartate + phosphate + H(+). Its pathway is pyrimidine metabolism; UMP biosynthesis via de novo pathway; (S)-dihydroorotate from bicarbonate: step 2/3. Functionally, catalyzes the condensation of carbamoyl phosphate and aspartate to form carbamoyl aspartate and inorganic phosphate, the committed step in the de novo pyrimidine nucleotide biosynthesis pathway. The sequence is that of Aspartate carbamoyltransferase catalytic subunit from Caulobacter vibrioides (strain ATCC 19089 / CIP 103742 / CB 15) (Caulobacter crescentus).